The following is a 302-amino-acid chain: Recombination-associated protein RdgC (302 aa).

This sequence belongs to the RdgC family.

The protein resides in the cytoplasm. It is found in the nucleoid. Functionally, may be involved in recombination. The protein is Recombination-associated protein RdgC of Xylella fastidiosa (strain M23).